A 485-amino-acid chain; its full sequence is Pelle-like serine/threonine-protein kinase pik-1 (485 aa).

Residues T115–S132 show a composition bias toward polar residues. A disordered region spans residues T115–S155. Residues S142–S152 show a composition bias toward low complexity. One can recognise a Protein kinase domain in the interval F185–V485. ATP is bound by residues I191–V199 and K214. Residue D318 is the Proton acceptor of the active site.

The protein belongs to the protein kinase superfamily. TKL Ser/Thr protein kinase family. Pelle subfamily. As to quaternary structure, interacts with actl-1. In terms of tissue distribution, expressed in the nervous system.

It carries out the reaction L-seryl-[protein] + ATP = O-phospho-L-seryl-[protein] + ADP + H(+). The enzyme catalyses L-threonyl-[protein] + ATP = O-phospho-L-threonyl-[protein] + ADP + H(+). Its function is as follows. Through association with the adapter actl-1, may act downstream of the receptor complex composed of ilcr-1 and ilcr-2, which is a signaling complex that modulates neuronal activity and animal behavior in response to sensory neuron input. The chain is Pelle-like serine/threonine-protein kinase pik-1 from Caenorhabditis elegans.